A 207-amino-acid polypeptide reads, in one-letter code: Large ribosomal subunit protein uL4 (207 aa).

The span at 45–57 shows a compositional bias: polar residues; it reads RQGTHSVKNRSTV. The segment at 45 to 77 is disordered; sequence RQGTHSVKNRSTVSGGGRKPWRQKGTGNARQGS.

The protein belongs to the universal ribosomal protein uL4 family. In terms of assembly, part of the 50S ribosomal subunit.

One of the primary rRNA binding proteins, this protein initially binds near the 5'-end of the 23S rRNA. It is important during the early stages of 50S assembly. It makes multiple contacts with different domains of the 23S rRNA in the assembled 50S subunit and ribosome. Functionally, forms part of the polypeptide exit tunnel. The sequence is that of Large ribosomal subunit protein uL4 from Oenococcus oeni (strain ATCC BAA-331 / PSU-1).